Consider the following 157-residue polypeptide: SsrA-binding protein (157 aa).

The disordered stretch occupies residues 126–157 (GLGKGKQAHDKREAVKERDWQRDRARLMRDRG). The segment covering 132-157 (QAHDKREAVKERDWQRDRARLMRDRG) has biased composition (basic and acidic residues).

The protein belongs to the SmpB family.

The protein resides in the cytoplasm. Its function is as follows. Required for rescue of stalled ribosomes mediated by trans-translation. Binds to transfer-messenger RNA (tmRNA), required for stable association of tmRNA with ribosomes. tmRNA and SmpB together mimic tRNA shape, replacing the anticodon stem-loop with SmpB. tmRNA is encoded by the ssrA gene; the 2 termini fold to resemble tRNA(Ala) and it encodes a 'tag peptide', a short internal open reading frame. During trans-translation Ala-aminoacylated tmRNA acts like a tRNA, entering the A-site of stalled ribosomes, displacing the stalled mRNA. The ribosome then switches to translate the ORF on the tmRNA; the nascent peptide is terminated with the 'tag peptide' encoded by the tmRNA and targeted for degradation. The ribosome is freed to recommence translation, which seems to be the essential function of trans-translation. The sequence is that of SsrA-binding protein from Methylobacterium radiotolerans (strain ATCC 27329 / DSM 1819 / JCM 2831 / NBRC 15690 / NCIMB 10815 / 0-1).